A 215-amino-acid chain; its full sequence is UPF0056 membrane protein bbp_248 (215 aa).

A run of 6 helical transmembrane segments spans residues 10-32, 52-74, 78-100, 119-141, 151-169, and 190-207; these read IYIS…PIFT, FSVA…LFGI, SFRI…GNFI, ISIV…TIVW, IFGC…WTLF, and IMGL…LAGL.

The protein belongs to the UPF0056 (MarC) family.

Its subcellular location is the cell membrane. This is UPF0056 membrane protein bbp_248 from Buchnera aphidicola subsp. Baizongia pistaciae (strain Bp).